The chain runs to 209 residues: Large ribosomal subunit protein bL9 (209 aa).

The disordered stretch occupies residues 169–209 (RDGASFTEDYDPNAEPGLATEAEEAVADADDNAETNSEESL). Residues 189-209 (EAEEAVADADDNAETNSEESL) show a composition bias toward acidic residues.

Belongs to the bacterial ribosomal protein bL9 family.

Binds to the 23S rRNA. This chain is Large ribosomal subunit protein bL9, found in Zymomonas mobilis subsp. mobilis (strain ATCC 31821 / ZM4 / CP4).